The primary structure comprises 234 residues: 2-C-methyl-D-erythritol 4-phosphate cytidylyltransferase (234 aa).

Belongs to the IspD/TarI cytidylyltransferase family. IspD subfamily.

It catalyses the reaction 2-C-methyl-D-erythritol 4-phosphate + CTP + H(+) = 4-CDP-2-C-methyl-D-erythritol + diphosphate. Its pathway is isoprenoid biosynthesis; isopentenyl diphosphate biosynthesis via DXP pathway; isopentenyl diphosphate from 1-deoxy-D-xylulose 5-phosphate: step 2/6. Its function is as follows. Catalyzes the formation of 4-diphosphocytidyl-2-C-methyl-D-erythritol from CTP and 2-C-methyl-D-erythritol 4-phosphate (MEP). The sequence is that of 2-C-methyl-D-erythritol 4-phosphate cytidylyltransferase from Desulforamulus reducens (strain ATCC BAA-1160 / DSM 100696 / MI-1) (Desulfotomaculum reducens).